The sequence spans 1343 residues: DNA-directed RNA polymerase subunit beta (1343 aa).

This sequence belongs to the RNA polymerase beta chain family. As to quaternary structure, the RNAP catalytic core consists of 2 alpha, 1 beta, 1 beta' and 1 omega subunit. When a sigma factor is associated with the core the holoenzyme is formed, which can initiate transcription.

The catalysed reaction is RNA(n) + a ribonucleoside 5'-triphosphate = RNA(n+1) + diphosphate. Functionally, DNA-dependent RNA polymerase catalyzes the transcription of DNA into RNA using the four ribonucleoside triphosphates as substrates. The sequence is that of DNA-directed RNA polymerase subunit beta from Shewanella sp. (strain W3-18-1).